A 185-amino-acid chain; its full sequence is Ribosome-recycling factor (185 aa).

It belongs to the RRF family.

The protein resides in the cytoplasm. Responsible for the release of ribosomes from messenger RNA at the termination of protein biosynthesis. May increase the efficiency of translation by recycling ribosomes from one round of translation to another. The sequence is that of Ribosome-recycling factor from Campylobacter fetus subsp. fetus (strain 82-40).